The following is a 419-amino-acid chain: Protein translocase subunit SecY (419 aa).

A run of 10 helical transmembrane segments spans residues 19-39 (IMIL…ITEV), 64-84 (VISI…AVQF), 113-133 (ILTV…LRSF), 143-163 (FVVA…SEVI), 167-189 (GIGN…FLIN), 202-222 (SNLY…FSTL), 255-275 (FGQA…FLTT), 299-319 (IFYF…YTLI), 359-379 (FVGS…AAAL), and 380-400 (GVHP…SIIN).

It belongs to the SecY/SEC61-alpha family. In terms of assembly, component of the plastid Sec protein translocase complex, which is composed of at least SecY and SecE.

It localises to the plastid. The protein localises to the chloroplast thylakoid membrane. The central subunit of the protein translocation channel SecYE. Consists of two halves formed by TMs 1-5 and 6-10. These two domains form a lateral gate at the front which open onto the bilayer between TMs 2 and 7, and are clamped together by SecE at the back. The channel is closed by both a pore ring composed of hydrophobic SecY resides and a short helix (helix 2A) on the extracellular side of the membrane which forms a plug. This is Protein translocase subunit SecY from Diacronema lutheri (Unicellular marine alga).